The primary structure comprises 271 residues: 2-dehydro-3-deoxyphosphooctonate aldolase (271 aa).

The protein belongs to the KdsA family.

Its subcellular location is the cytoplasm. It carries out the reaction D-arabinose 5-phosphate + phosphoenolpyruvate + H2O = 3-deoxy-alpha-D-manno-2-octulosonate-8-phosphate + phosphate. Its pathway is carbohydrate biosynthesis; 3-deoxy-D-manno-octulosonate biosynthesis; 3-deoxy-D-manno-octulosonate from D-ribulose 5-phosphate: step 2/3. It functions in the pathway bacterial outer membrane biogenesis; lipopolysaccharide biosynthesis. The chain is 2-dehydro-3-deoxyphosphooctonate aldolase from Campylobacter jejuni subsp. jejuni serotype O:23/36 (strain 81-176).